We begin with the raw amino-acid sequence, 848 residues long: MLRRAASNAYSWWWASHVRTKQSKWLEENLQDIEEKVEYALKLLEDEGDSFAKRAEMYYKRRPELISFVEESFKAYRALAERYDHISKELQNANTTIASVFPDQVPEFAMNEDDDDDAPVSPRHHKNKTSNKNVPKVPDLPIKDPEAAKKMFMSRKAIQEQNASSVVNKSGLSKTEAVEEIDKLQKEILVLQTEKEFVKTSYENGLAKYWEIEKCIMEKQGKVSSLQDEFDEGAVVIEDKEAQILMSTTALKSCQEKLEELRDKQEQNVKEVDVSRKQISESTEEFGNLSDALLGDGKGNHEIYSEKEKLESLGEKVNDEFDDSEAKSCLTIPDVADKIDELVNDVINLENLFSSQAALIHRLREEIDDLKAQIRALQKENNSSQTDDNMDMGKKLKEMEEKVNGVKDIDQEVEEKSDNIDKHLTRAHMKLSFLSKRLKSLTQEGEDEELKATNVPIQDIGSLTDTKFPEENIDDTVVSENALDIKSASEVVFAEKDLSDEVNQEEAIETKTKEASLSDLEKHISSPKSDIITTQESSDELFLQKLLAHGIEGREKHLLTEYTKVLRNYKEVKKLLHETETKLKNVNTLKDEGKDQQRGQLFMLICREDNNATNAITGQKQRMSPNEEQLGARVDALLSENLNLLVRFSNSFGKIQQFDTGIKDLHGEMLKIIKQKNQDGGKNTLRSNVRPIYKHLSEIRTEMTVWLEKSLLLKEEINIRASTLSDIHNEITEALKTDSEDSEIKFTIYQGAKFEGEVSNMKKENNRIAEELQTGLDQVTKLMKDADTTLEKLSEEFSLSESNTQSSQDRSRIPLRSFIFDRKPKKQRLSLFSCIQPSLSKMKKPAGS.

The NAB domain maps to 10–90 (YSWWWASHVR…ERYDHISKEL (81 aa)). The disordered stretch occupies residues 108–141 (FAMNEDDDDDAPVSPRHHKNKTSNKNVPKVPDLP). Coiled coils occupy residues 172-204 (LSKT…SYEN), 241-278 (EAQI…SRKQ), 305-454 (SEKE…KATN), and 752-797 (AKFE…SEEF).

This sequence belongs to the NET family.

Its function is as follows. Plant-specific actin binding protein. May be part of a membrane-cytoskeletal adapter complex. The protein is Protein NETWORKED 2C of Arabidopsis thaliana (Mouse-ear cress).